The primary structure comprises 68 residues: Conotoxin Ar5.3 (68 aa).

The N-terminal stretch at 1 to 19 (MLCLPVFIILLLLASPAAS) is a signal peptide. A propeptide spanning residues 20–53 (NPLEKRIQNDLIRAALEDADMENDPRSIIDSVKT) is cleaved from the precursor.

The protein belongs to the conotoxin T superfamily. Contains 2 disulfide bonds that can be either 'C1-C3, C2-C4' or 'C1-C4, C2-C3', since these disulfide connectivities have been observed for conotoxins with cysteine framework V (for examples, see AC P0DQQ7 and AC P81755). In terms of tissue distribution, expressed by the venom duct.

It is found in the secreted. The sequence is that of Conotoxin Ar5.3 from Conus arenatus (Sand-dusted cone).